The sequence spans 56 residues: Small ribosomal subunit protein uS14A (56 aa).

Residues C21 and C24 each coordinate Zn(2+). The residue at position 25 (S25) is a Phosphoserine. The Zn(2+) site is built by C39 and C42.

It belongs to the universal ribosomal protein uS14 family. Component of the small ribosomal subunit (SSU). Mature yeast ribosomes consist of a small (40S) and a large (60S) subunit. The 40S small subunit contains 1 molecule of ribosomal RNA (18S rRNA) and 33 different proteins (encoded by 57 genes). The large 60S subunit contains 3 rRNA molecules (25S, 5.8S and 5S rRNA) and 46 different proteins (encoded by 81 genes). Requires Zn(2+) as cofactor.

It is found in the cytoplasm. Component of the ribosome, a large ribonucleoprotein complex responsible for the synthesis of proteins in the cell. The small ribosomal subunit (SSU) binds messenger RNAs (mRNAs) and translates the encoded message by selecting cognate aminoacyl-transfer RNA (tRNA) molecules. The large subunit (LSU) contains the ribosomal catalytic site termed the peptidyl transferase center (PTC), which catalyzes the formation of peptide bonds, thereby polymerizing the amino acids delivered by tRNAs into a polypeptide chain. The nascent polypeptides leave the ribosome through a tunnel in the LSU and interact with protein factors that function in enzymatic processing, targeting, and the membrane insertion of nascent chains at the exit of the ribosomal tunnel. In Saccharomyces cerevisiae (strain ATCC 204508 / S288c) (Baker's yeast), this protein is Small ribosomal subunit protein uS14A.